The following is a 511-amino-acid chain: 2-isopropylmalate synthase (511 aa).

One can recognise a Pyruvate carboxyltransferase domain in the interval 6-269 (IIIFDTTLRD…YTDIKCENIF (264 aa)). Residues aspartate 15, histidine 203, histidine 205, and asparagine 239 each contribute to the Mn(2+) site. A regulatory domain region spans residues 394–511 (ILEKLSVISG…SLKVEERKMA (118 aa)).

This sequence belongs to the alpha-IPM synthase/homocitrate synthase family. LeuA type 1 subfamily. In terms of assembly, homodimer. Requires Mn(2+) as cofactor.

It is found in the cytoplasm. The enzyme catalyses 3-methyl-2-oxobutanoate + acetyl-CoA + H2O = (2S)-2-isopropylmalate + CoA + H(+). It functions in the pathway amino-acid biosynthesis; L-leucine biosynthesis; L-leucine from 3-methyl-2-oxobutanoate: step 1/4. Catalyzes the condensation of the acetyl group of acetyl-CoA with 3-methyl-2-oxobutanoate (2-ketoisovalerate) to form 3-carboxy-3-hydroxy-4-methylpentanoate (2-isopropylmalate). This chain is 2-isopropylmalate synthase, found in Campylobacter jejuni subsp. jejuni serotype O:6 (strain 81116 / NCTC 11828).